A 116-amino-acid chain; its full sequence is Selenoprotein H (116 aa).

Lysine 20 is subject to N6-acetyllysine. Positions 35–38 (CTSU) form a cross-link, cysteinyl-selenocysteine (Cys-Sec); redox-active. Position 38 (selenocysteine 38) is a non-standard amino acid, selenocysteine.

Belongs to the SelWTH family.

Functionally, may be involved in a redox-related process. This is Selenoprotein H from Mus musculus (Mouse).